Consider the following 429-residue polypeptide: UDP-N-acetylglucosamine 1-carboxyvinyltransferase (429 aa).

Phosphoenolpyruvate is bound at residue 22–23; that stretch reads KN. Arg102 lines the UDP-N-acetyl-alpha-D-glucosamine pocket. The active-site Proton donor is the Cys126. A 2-(S-cysteinyl)pyruvic acid O-phosphothioketal modification is found at Cys126. Residues 131–135, 171–174, Asp316, and Ile338 each bind UDP-N-acetyl-alpha-D-glucosamine; these read RPVDL and KVSV.

Belongs to the EPSP synthase family. MurA subfamily.

It localises to the cytoplasm. It carries out the reaction phosphoenolpyruvate + UDP-N-acetyl-alpha-D-glucosamine = UDP-N-acetyl-3-O-(1-carboxyvinyl)-alpha-D-glucosamine + phosphate. The protein operates within cell wall biogenesis; peptidoglycan biosynthesis. In terms of biological role, cell wall formation. Adds enolpyruvyl to UDP-N-acetylglucosamine. The sequence is that of UDP-N-acetylglucosamine 1-carboxyvinyltransferase from Brucella abortus (strain S19).